Reading from the N-terminus, the 390-residue chain is DNA polymerase IV (390 aa).

The region spanning 6–187 (VMHVDLDAFF…LDIAVMPGIG (182 aa)) is the UmuC domain. Asp10 and Asp105 together coordinate Mg(2+). The active site involves Glu106.

It belongs to the DNA polymerase type-Y family. As to quaternary structure, monomer. Mg(2+) is required as a cofactor.

The protein resides in the cytoplasm. It carries out the reaction DNA(n) + a 2'-deoxyribonucleoside 5'-triphosphate = DNA(n+1) + diphosphate. Poorly processive, error-prone DNA polymerase involved in untargeted mutagenesis. Copies undamaged DNA at stalled replication forks, which arise in vivo from mismatched or misaligned primer ends. These misaligned primers can be extended by PolIV. Exhibits no 3'-5' exonuclease (proofreading) activity. May be involved in translesional synthesis, in conjunction with the beta clamp from PolIII. The sequence is that of DNA polymerase IV from Dehalococcoides mccartyi (strain CBDB1).